The following is a 289-amino-acid chain: Trihelix transcription factor GT-3b (289 aa).

Positions 42 to 98 (WSVEETKELIGIRGELDQTFMETKRNKLLWEVISNKMRDKSFPRSPEQCKCKWKNLV) constitute a Myb-like domain. The Bipartite nuclear localization signal motif lies at 65–81 (KRNKLLWEVISNKMRDK). The interval 137-200 (ESEGGGGGTS…SNSSNSNNGV (64 aa)) is disordered. The span at 156-168 (SDEEEENVNEELV) shows a compositional bias: acidic residues. The short motif at 179-188 (PKKNIAKKRK) is the Nuclear localization signal element. Over residues 190-199 (GSNSSNSNNG) the composition is skewed to low complexity. Residues 223-275 (EAREKERAEKEEEWRRKMEELEKERLAMERMWRDREEQRRSREEMRAEKRDSL) are a coiled coil.

In terms of assembly, heterodimer with GT-3A. Associated with the mediator complex.

The protein localises to the nucleus. Functionally, probable transcription factor that may play a role in the induction of CAM4 in response to pathogen and salt. This is Trihelix transcription factor GT-3b (GT-3B) from Arabidopsis thaliana (Mouse-ear cress).